Consider the following 210-residue polypeptide: 23.5 kDa heat shock protein, mitochondrial (210 aa).

Residues 1–20 (MASSSALALRRLLSSSTVAV) constitute a mitochondrion transit peptide. Positions 102-210 (MGASGVRRGW…RNNIRHINVD (109 aa)) constitute a sHSP domain.

The protein belongs to the small heat shock protein (HSP20) family. In terms of assembly, may form oligomeric structures.

The protein resides in the mitochondrion. The chain is 23.5 kDa heat shock protein, mitochondrial (HSP23.5) from Arabidopsis thaliana (Mouse-ear cress).